The primary structure comprises 557 residues: Formate--tetrahydrofolate ligase (557 aa).

Residue 65–72 (SPAGEGKT) participates in ATP binding.

Belongs to the formate--tetrahydrofolate ligase family.

The catalysed reaction is (6S)-5,6,7,8-tetrahydrofolate + formate + ATP = (6R)-10-formyltetrahydrofolate + ADP + phosphate. It functions in the pathway one-carbon metabolism; tetrahydrofolate interconversion. The protein is Formate--tetrahydrofolate ligase of Methylobacillus flagellatus (strain ATCC 51484 / DSM 6875 / VKM B-1610 / KT).